We begin with the raw amino-acid sequence, 786 residues long: Endonuclease MutS2 (786 aa).

ATP is bound at residue 335 to 342 (GPNTGGKT). Positions 711-786 (LDLRGERFEN…GLGVTVVELK (76 aa)) constitute a Smr domain.

The protein belongs to the DNA mismatch repair MutS family. MutS2 subfamily. In terms of assembly, homodimer. Binds to stalled ribosomes, contacting rRNA.

Its function is as follows. Endonuclease that is involved in the suppression of homologous recombination and thus may have a key role in the control of bacterial genetic diversity. In terms of biological role, acts as a ribosome collision sensor, splitting the ribosome into its 2 subunits. Detects stalled/collided 70S ribosomes which it binds and splits by an ATP-hydrolysis driven conformational change. Acts upstream of the ribosome quality control system (RQC), a ribosome-associated complex that mediates the extraction of incompletely synthesized nascent chains from stalled ribosomes and their subsequent degradation. Probably generates substrates for RQC. This is Endonuclease MutS2 from Bacillus cereus (strain B4264).